Here is a 380-residue protein sequence, read N- to C-terminus: Lipid-A-disaccharide synthase (380 aa).

This sequence belongs to the LpxB family.

The catalysed reaction is a lipid X + a UDP-2-N,3-O-bis[(3R)-3-hydroxyacyl]-alpha-D-glucosamine = a lipid A disaccharide + UDP + H(+). It participates in bacterial outer membrane biogenesis; LPS lipid A biosynthesis. Functionally, condensation of UDP-2,3-diacylglucosamine and 2,3-diacylglucosamine-1-phosphate to form lipid A disaccharide, a precursor of lipid A, a phosphorylated glycolipid that anchors the lipopolysaccharide to the outer membrane of the cell. This is Lipid-A-disaccharide synthase from Francisella philomiragia subsp. philomiragia (strain ATCC 25017 / CCUG 19701 / FSC 153 / O#319-036).